Reading from the N-terminus, the 426-residue chain is Serine--tRNA ligase (426 aa).

A disordered region spans residues 103–129 (VPNLPDDSVPTGKDENDNPEIRRWGTP). A compositionally biased stretch (basic and acidic residues) spans 114–125 (GKDENDNPEIRR). 230–232 (TAE) is an L-serine binding site. An ATP-binding site is contributed by 261-263 (RSE). L-serine is bound at residue Glu-284. Residue 348-351 (EISS) coordinates ATP. Ser-384 is a binding site for L-serine.

Belongs to the class-II aminoacyl-tRNA synthetase family. Type-1 seryl-tRNA synthetase subfamily. In terms of assembly, homodimer. The tRNA molecule binds across the dimer.

The protein localises to the cytoplasm. It catalyses the reaction tRNA(Ser) + L-serine + ATP = L-seryl-tRNA(Ser) + AMP + diphosphate + H(+). The enzyme catalyses tRNA(Sec) + L-serine + ATP = L-seryl-tRNA(Sec) + AMP + diphosphate + H(+). It functions in the pathway aminoacyl-tRNA biosynthesis; selenocysteinyl-tRNA(Sec) biosynthesis; L-seryl-tRNA(Sec) from L-serine and tRNA(Sec): step 1/1. Its function is as follows. Catalyzes the attachment of serine to tRNA(Ser). Is also able to aminoacylate tRNA(Sec) with serine, to form the misacylated tRNA L-seryl-tRNA(Sec), which will be further converted into selenocysteinyl-tRNA(Sec). The sequence is that of Serine--tRNA ligase from Dichelobacter nodosus (strain VCS1703A).